Reading from the N-terminus, the 541-residue chain is Membrane protein insertase YidC (541 aa).

A run of 6 helical transmembrane segments spans residues asparagine 6–aspartate 26, valine 326–phenylalanine 346, leucine 349–tyrosine 369, glycine 420–leucine 440, leucine 457–methionine 477, and methionine 500–glycine 520.

Belongs to the OXA1/ALB3/YidC family. Type 1 subfamily. In terms of assembly, interacts with the Sec translocase complex via SecD. Specifically interacts with transmembrane segments of nascent integral membrane proteins during membrane integration.

Its subcellular location is the cell inner membrane. Its function is as follows. Required for the insertion and/or proper folding and/or complex formation of integral membrane proteins into the membrane. Involved in integration of membrane proteins that insert both dependently and independently of the Sec translocase complex, as well as at least some lipoproteins. Aids folding of multispanning membrane proteins. The chain is Membrane protein insertase YidC from Shewanella amazonensis (strain ATCC BAA-1098 / SB2B).